Consider the following 380-residue polypeptide: SAM and SH3 domain-containing protein 3 (380 aa).

2 disordered regions span residues 1 to 76 (MLRR…GKKW) and 96 to 168 (LSEE…SPAP). Residues 22–41 (LQRSSSFKDFAKSKPSSPVV) are compositionally biased toward low complexity. 3 positions are modified to phosphoserine: Ser27, Ser34, and Ser42. A Phosphothreonine modification is found at Thr61. Position 97 is a phosphoserine (Ser97). Phosphothreonine is present on Thr103. A Phosphoserine modification is found at Ser110. The residue at position 112 (Thr112) is a Phosphothreonine. Residues Ser113 and Ser120 each carry the phosphoserine modification. The segment covering 141 to 150 (LSRQTSTGSE) has biased composition (polar residues). Residues 173–234 (PFCGRARVHT…KFIYVDVLPE (62 aa)) form the SH3 domain. The SAM domain maps to 252 to 316 (PKPKTLHELL…LTAAELLLDY (65 aa)). Thr318 carries the post-translational modification Phosphothreonine. Acidic residues predominate over residues 318–327 (TGSEEAEEGA). A disordered region spans residues 318–380 (TGSEEAEEGA…LQGLSLSGAP (63 aa)). Ser320 carries the phosphoserine modification. Polar residues predominate over residues 369 to 380 (EQLQGLSLSGAP).

As to expression, preferentially expressed in lymphoid tissues. Expressed in bone marrow, thymus, spleen, lymph nodes and Peyer patches of gut. In the spleen and lymph nodes, expressed in both T- and B-cells. In the thymus, in the medulla and cortex.

In terms of biological role, may function as a signaling adapter protein in lymphocytes. The protein is SAM and SH3 domain-containing protein 3 (Sash3) of Mus musculus (Mouse).